The chain runs to 86 residues: Beta-toxin CsEI (86 aa).

Residues 1–19 form the signal peptide; that stretch reads MNSLLMITACLVLIGTVWA. Residues 20 to 84 form the LCN-type CS-alpha/beta domain; sequence KDGYLVEKTG…TWPLPNKTCG (65 aa). Cystine bridges form between C30–C83, C34–C59, C43–C64, and C47–C66. A Cysteine amide modification is found at C83.

The protein belongs to the long (4 C-C) scorpion toxin superfamily. Sodium channel inhibitor family. Beta subfamily. Expressed by the venom gland.

The protein localises to the secreted. Beta toxins bind voltage-independently at site-4 of sodium channels (Nav) and shift the voltage of activation toward more negative potentials thereby affecting sodium channel activation and promoting spontaneous and repetitive firing. Affects channels from chicken and frog. This is Beta-toxin CsEI from Centruroides sculpturatus (Arizona bark scorpion).